A 169-amino-acid chain; its full sequence is Ubiquitin-fold modifier-conjugating enzyme 1 (169 aa).

Catalysis depends on C116, which acts as the Glycyl thioester intermediate.

Belongs to the ubiquitin-conjugating enzyme family. UFC1 subfamily.

In terms of biological role, E2-like enzyme which forms an intermediate with UFM1 via a thioester linkage. The chain is Ubiquitin-fold modifier-conjugating enzyme 1 from Branchiostoma floridae (Florida lancelet).